Here is a 419-residue protein sequence, read N- to C-terminus: UDP-N-acetylmuramoylalanine--D-glutamate ligase (419 aa).

An ATP-binding site is contributed by 109–115 (GSAGKTT).

This sequence belongs to the MurCDEF family.

It localises to the cytoplasm. The catalysed reaction is UDP-N-acetyl-alpha-D-muramoyl-L-alanine + D-glutamate + ATP = UDP-N-acetyl-alpha-D-muramoyl-L-alanyl-D-glutamate + ADP + phosphate + H(+). It participates in cell wall biogenesis; peptidoglycan biosynthesis. Cell wall formation. Catalyzes the addition of glutamate to the nucleotide precursor UDP-N-acetylmuramoyl-L-alanine (UMA). The protein is UDP-N-acetylmuramoylalanine--D-glutamate ligase of Chlamydia caviae (strain ATCC VR-813 / DSM 19441 / 03DC25 / GPIC) (Chlamydophila caviae).